The primary structure comprises 279 residues: Acetyl-coenzyme A carboxylase carboxyl transferase subunit beta (279 aa).

Residues 23-279 (LWWKCEECGA…LVTLFSMLKV (257 aa)) form the CoA carboxyltransferase N-terminal domain. Zn(2+)-binding residues include Cys27, Cys30, Cys46, and Cys49. Residues 27-49 (CEECGAMLHKKQFEDHFFTCAEC) form a C4-type zinc finger.

Belongs to the AccD/PCCB family. Acetyl-CoA carboxylase is a heterohexamer composed of biotin carboxyl carrier protein (AccB), biotin carboxylase (AccC) and two subunits each of ACCase subunit alpha (AccA) and ACCase subunit beta (AccD). The cofactor is Zn(2+).

It localises to the cytoplasm. The catalysed reaction is N(6)-carboxybiotinyl-L-lysyl-[protein] + acetyl-CoA = N(6)-biotinyl-L-lysyl-[protein] + malonyl-CoA. Its pathway is lipid metabolism; malonyl-CoA biosynthesis; malonyl-CoA from acetyl-CoA: step 1/1. Component of the acetyl coenzyme A carboxylase (ACC) complex. Biotin carboxylase (BC) catalyzes the carboxylation of biotin on its carrier protein (BCCP) and then the CO(2) group is transferred by the transcarboxylase to acetyl-CoA to form malonyl-CoA. In Pelodictyon phaeoclathratiforme (strain DSM 5477 / BU-1), this protein is Acetyl-coenzyme A carboxylase carboxyl transferase subunit beta.